Here is a 648-residue protein sequence, read N- to C-terminus: tRNA 5-methylaminomethyl-2-thiouridine biosynthesis bifunctional protein MnmC (648 aa).

The tract at residues M1–A228 is tRNA (mnm(5)s(2)U34)-methyltransferase. The FAD-dependent cmnm(5)s(2)U34 oxidoreductase stretch occupies residues I252–G648.

It in the N-terminal section; belongs to the methyltransferase superfamily. tRNA (mnm(5)s(2)U34)-methyltransferase family. In the C-terminal section; belongs to the DAO family. Requires FAD as cofactor.

It is found in the cytoplasm. The enzyme catalyses 5-aminomethyl-2-thiouridine(34) in tRNA + S-adenosyl-L-methionine = 5-methylaminomethyl-2-thiouridine(34) in tRNA + S-adenosyl-L-homocysteine + H(+). Catalyzes the last two steps in the biosynthesis of 5-methylaminomethyl-2-thiouridine (mnm(5)s(2)U) at the wobble position (U34) in tRNA. Catalyzes the FAD-dependent demodification of cmnm(5)s(2)U34 to nm(5)s(2)U34, followed by the transfer of a methyl group from S-adenosyl-L-methionine to nm(5)s(2)U34, to form mnm(5)s(2)U34. The sequence is that of tRNA 5-methylaminomethyl-2-thiouridine biosynthesis bifunctional protein MnmC from Burkholderia lata (strain ATCC 17760 / DSM 23089 / LMG 22485 / NCIMB 9086 / R18194 / 383).